The following is a 326-amino-acid chain: Adenosine receptor A1 (326 aa).

Over 1-10 (MPPSISAFQA) the chain is Extracellular. Residues 11 to 33 (AYIGIEVLIALVSVPGNVLVIWA) form a helical membrane-spanning segment. Residues 34 to 46 (VKVNQALRDATFC) are Cytoplasmic-facing. Residues 47–69 (FIVSLAVADVAVGALVIPLAILI) traverse the membrane as a helical segment. At 70 to 80 (NIGPRTYFHTC) the chain is on the extracellular side. Cysteine 80 and cysteine 169 are joined by a disulfide. The chain crosses the membrane as a helical span at residues 81–102 (LKVACPVLILTQSSILALLAIA). Residues 103-123 (VDRYLRVKIPLRYKTVVTPRR) lie on the Cytoplasmic side of the membrane. A helical transmembrane segment spans residues 124–146 (AVVAITGCWILSFVVGLTPMFGW). At 147–176 (NNLSAVERDWLANGSVGEPVIECQFEKVIS) the chain is on the extracellular side. 2 N-linked (GlcNAc...) asparagine glycosylation sites follow: asparagine 148 and asparagine 159. Residues 177–201 (MEYMVYFNFFVWVLPPLLLMVLIYM) traverse the membrane as a helical segment. Over 202-235 (EVFYLIRKQLNKKVSASSGDPQKYYGKELKIAKS) the chain is Cytoplasmic. A helical membrane pass occupies residues 236–259 (LALILFLFALSWLPLHILNCITLF). Topologically, residues 260-267 (CPSCHMPR) are extracellular. Residues 268 to 292 (ILIYIAIFLSHGNSAMNPIVYAFRI) form a helical membrane-spanning segment. Residues 293–326 (QKFRVTFLKIWNDHFRCQPAPPVDEDAPAERPDD) lie on the Cytoplasmic side of the membrane. Cysteine 309 is lipidated: S-palmitoyl cysteine.

It belongs to the G-protein coupled receptor 1 family.

The protein localises to the cell membrane. In terms of biological role, receptor for adenosine. The activity of this receptor is mediated by G proteins which inhibit adenylyl cyclase. In Bos taurus (Bovine), this protein is Adenosine receptor A1 (ADORA1).